Here is a 350-residue protein sequence, read N- to C-terminus: MAPSVTIDNISDFSPITTTTKTTSFNLRTLLLAPPSIASHEEKLRNVLATHDRSVTDLQMLDRLSAGLVTLPESTYDLVLILTDADGTRAESTELLTRDVFGKITQALKTGAKLQAQDGTFGQEIDGAEYREAILAGLVTEGGVMLKPDHSASVAVPLRLRRKDNSKTTAVSNAGPPVSTVEVPVSGKRKSVDMTEDVPEKDVPKNDVPKGVGFIDFSDDFDAEDDDDELIDEDTLLTEEDMKKPLAIPPECAPRAGKRRRACKDCTCGLAEKLAKEDAEKRATADSQLQALKLDADDLAEVDFTVKGKVGSCGNCSLGDAFRCDGCPYIGMPAFKPGEEVRLLNNDVQL.

The tract at residues 23 to 156 (TSFNLRTLLL…KPDHSASVAV (134 aa)) is N-terminal SAM-like domain. Positions 157–242 (PLRLRRKDNS…EDTLLTEEDM (86 aa)) are linker. The segment at 165-209 (NSKTTAVSNAGPPVSTVEVPVSGKRKSVDMTEDVPEKDVPKNDVP) is disordered. Residues 190-208 (KSVDMTEDVPEKDVPKNDV) are compositionally biased toward basic and acidic residues. [2Fe-2S] cluster contacts are provided by Cys-252, Cys-263, Cys-266, and Cys-268. The tract at residues 252–268 (CAPRAGKRRRACKDCTC) is fe-S binding site A. Residues Cys-313, Cys-316, Cys-324, and Cys-327 each coordinate [4Fe-4S] cluster. Short sequence motifs (cx2C motif) lie at residues 313–316 (CGNC) and 324–327 (CDGC). A fe-S binding site B region spans residues 313 to 327 (CGNCSLGDAFRCDGC).

The protein belongs to the anamorsin family. Monomer. Interacts with TAH18. Interacts with MIA40. [2Fe-2S] cluster is required as a cofactor. [4Fe-4S] cluster serves as cofactor.

The protein resides in the cytoplasm. Its subcellular location is the mitochondrion intermembrane space. Functionally, component of the cytosolic iron-sulfur (Fe-S) protein assembly (CIA) machinery required for the maturation of extramitochondrial Fe-S proteins. Part of an electron transfer chain functioning in an early step of cytosolic Fe-S biogenesis, facilitating the de novo assembly of a [4Fe-4S] cluster on the scaffold complex CFD1-NBP35. Electrons are transferred to DRE2 from NADPH via the FAD- and FMN-containing protein TAH18. TAH18-DRE2 are also required for the assembly of the diferric tyrosyl radical cofactor of ribonucleotide reductase (RNR), probably by providing electrons for reduction during radical cofactor maturation in the catalytic small subunit RNR2. This Sclerotinia sclerotiorum (strain ATCC 18683 / 1980 / Ss-1) (White mold) protein is Fe-S cluster assembly protein dre2.